Here is a 324-residue protein sequence, read N- to C-terminus: MSLLRSLRFFPVACTGRSARAVLLQPSQPWHTLHAGPSLSSSASSKELLMKLRRTTGYSFVNCKKALETCGGDLKQAEAWLHKQAQKEGWSKAAKLHGRKTKEGLIGLLQEENTAVLVEVNCETDFVSRNVKFQQLVQQVALGTMAHCQNLTDQLSTYSKGFLNSSELSELAAGPDGEGSLKDQLALAIGTLGENMSLKRAAWVKVPSGFYVGSYVHGEMQSPSLQNLVLGKYGALVICQTPEQITNLEEVGRRLGQHVVGMAPLSVGSLDDEPGGETETRMLPQPYLLDPSITLGQYVQPQGVTVVDFVRFECGEGEQVAEAE.

The transit peptide at 1–44 directs the protein to the mitochondrion; it reads MSLLRSLRFFPVACTGRSARAVLLQPSQPWHTLHAGPSLSSSAS. An N6-succinyllysine mark is found at Lys-75 and Lys-132. At Ser-269 the chain carries Phosphoserine.

The protein belongs to the EF-Ts family.

It localises to the mitochondrion. In terms of biological role, associates with the EF-Tu.GDP complex and induces the exchange of GDP to GTP. It remains bound to the aminoacyl-tRNA.EF-Tu.GTP complex up to the GTP hydrolysis stage on the ribosome. This Rattus norvegicus (Rat) protein is Elongation factor Ts, mitochondrial (Tsfm).